The chain runs to 319 residues: Protoheme IX farnesyltransferase (319 aa).

8 consecutive transmembrane segments (helical) span residues 59–79, 108–128, 131–151, 158–178, 183–203, 232–252, 254–274, and 299–319; these read IGLI…AGAF, EALV…WFGA, LSAW…TIIL, NIVW…AAVT, WPAI…YWPL, VVLY…AGGA, WVYT…SHAL, and LTLL…VIGG.

It belongs to the UbiA prenyltransferase family. Protoheme IX farnesyltransferase subfamily.

The protein localises to the cell membrane. It carries out the reaction heme b + (2E,6E)-farnesyl diphosphate + H2O = Fe(II)-heme o + diphosphate. Its pathway is porphyrin-containing compound metabolism; heme O biosynthesis; heme O from protoheme: step 1/1. Its function is as follows. Converts heme B (protoheme IX) to heme O by substitution of the vinyl group on carbon 2 of heme B porphyrin ring with a hydroxyethyl farnesyl side group. The polypeptide is Protoheme IX farnesyltransferase (Pseudarthrobacter chlorophenolicus (strain ATCC 700700 / DSM 12829 / CIP 107037 / JCM 12360 / KCTC 9906 / NCIMB 13794 / A6) (Arthrobacter chlorophenolicus)).